A 359-amino-acid chain; its full sequence is Peptide chain release factor 1 (359 aa).

An N5-methylglutamine modification is found at Gln235.

This sequence belongs to the prokaryotic/mitochondrial release factor family. Methylated by PrmC. Methylation increases the termination efficiency of RF1.

The protein resides in the cytoplasm. Functionally, peptide chain release factor 1 directs the termination of translation in response to the peptide chain termination codons UAG and UAA. The protein is Peptide chain release factor 1 of Verminephrobacter eiseniae (strain EF01-2).